The primary structure comprises 376 residues: Mitogen-activated protein kinase 4 (376 aa).

The 287-residue stretch at 43–329 (VPPLRPIGRG…VDEALCHPYL (287 aa)) folds into the Protein kinase domain. ATP contacts are provided by residues 49 to 57 (IGRGAYGIV) and Lys72. The Proton acceptor role is filled by Asp169. Thr201 carries the phosphothreonine modification. The TXY motif lies at 201-203 (TEY). Tyr203 carries the post-translational modification Phosphotyrosine.

The protein belongs to the protein kinase superfamily. CMGC Ser/Thr protein kinase family. MAP kinase subfamily. As to quaternary structure, interacts with MEKK1, MKK1, MKK2 and MKK6. May form a ternary complex composed of MEKK1 and MKK1/MKK2 and MPK4. Interacts with MKS1 and AP2C1. May form a ternary or larger complex with MKS1 and WRKY25 and/or WRKY33. Interacts with MAP65-1. No interactions with RACK1A, RACK1B or RACK1C. Interacts directly with ASR3 and mediates its phosphorylation. Binds to MEKK2. Interacts with PAT1. Binds to HT1. In terms of processing, dually phosphorylated on Thr-201 and Tyr-203, which activates the enzyme. Autophosphorylated on serine and tyrosine residues. Dephosphorylated by DSPTP1. Phosphorylated by MKK6 in vitro. As to expression, ubiquitous. Expressed in the veins and stomatal guard cells of leaf plates, petioles, stem, roots and flowers.

The protein resides in the cytoplasm. The protein localises to the nucleus. It localises to the cytoskeleton. The enzyme catalyses L-seryl-[protein] + ATP = O-phospho-L-seryl-[protein] + ADP + H(+). It carries out the reaction L-threonyl-[protein] + ATP = O-phospho-L-threonyl-[protein] + ADP + H(+). Activated by threonine and tyrosine phosphorylation. Activated by the MAP kinase kinases MKK1 and MKK2. Activated in response to touch, wounding, low temperature, low humidity, salt stress and the bacterial elicitors flagellin and harpin. Activated upon Pseudomonas syringae pv. tomato DC3000 infection. Repressed by the protein phosphatase 2C AP2C1. Repressed by DSPTP1-mediated dephosphorylation. Activated by the MAP kinase kinase MKK6 in vitro. The ANPs-MKK6-MPK4 module is involved in the regulation of plant cytokinesis during meiosis and mitosis. Essential to promote the progression of cytokinesis and for cellularization (formation of the cell plate) during male-specific meiosis. Involved in cortical microtubules organization and stabilization by regulating the phosphorylation state of microtubule-associated proteins such as MAP65-1. Involved in root hair development process. Negative regulator of systemic acquired resistance (SAR) and salicylic acid- (SA) mediated defense response. Required for jasmonic acid- (JA) mediated defense gene expression. May regulate activity of transcription factor controlling pathogenesis-related (PR) gene expression. Seems to act independently of the SAR regulatory protein NPR1 (Nonexpresser of PR1). Phosphorylates MKS1 and transcription factors WRKY25 and WRKY33. The MEKK1, MKK1/MKK2 and MPK4 function in a signaling pathway that modulates the expression of genes responding to biotic and abiotic stresses and also plays an important role in pathogen defense by negatively regulating innate immunity. Phosphorylates MEKK2 upon treatment with flg22. Involved in stomatal movement regulation by repressing HT1 and HT1-mediated GHR1 phosphorylation. The protein is Mitogen-activated protein kinase 4 of Arabidopsis thaliana (Mouse-ear cress).